Here is a 177-residue protein sequence, read N- to C-terminus: uncharacterized protein (177 aa).

This is an uncharacterized protein from Grapevine virus A (isolate Is 151) (GVA).